The sequence spans 163 residues: Periplasmic nitrate reductase, electron transfer subunit (163 aa).

The signal sequence occupies residues Met-1–Ala-32. The heme c site is built by His-76, Cys-90, Cys-93, His-94, His-111, Cys-130, Cys-133, and His-134.

It belongs to the NapB family. Component of the periplasmic nitrate reductase NapAB complex composed of NapA and NapB. Binds 2 heme C groups per subunit.

The protein resides in the periplasm. In terms of biological role, electron transfer subunit of the periplasmic nitrate reductase complex NapAB. Receives electrons from the membrane-anchored tetraheme c-type NapC protein and transfers these to NapA subunit, thus allowing electron flow between membrane and periplasm. Essential for periplasmic nitrate reduction with nitrate as the terminal electron acceptor. The sequence is that of Periplasmic nitrate reductase, electron transfer subunit from Neorhizobium galegae (Rhizobium galegae).